A 1520-amino-acid chain; its full sequence is DNA topoisomerase 2 top-2 (1520 aa).

The segment covering 1 to 10 has biased composition (acidic residues); that stretch reads MSDSDSEFSI. The tract at residues 1–40 is disordered; sequence MSDSDSEFSIEDSPKKKTAPKKEKASPKKKKDDANESMVM. Positions 12 to 34 are enriched in basic and acidic residues; the sequence is DSPKKKTAPKKEKASPKKKKDDA. Residues asparagine 126, asparagine 155, 183–185, 196–203, and 411–413 contribute to the ATP site; these read SSN, GRNGYGAK, and QTK. In terms of domain architecture, Toprim spans 490–607; that stretch reads CTLILTEGDS…SLIQRNFVEE (118 aa). Mg(2+)-binding residues include glutamate 496, aspartate 576, and aspartate 578. The Topo IIA-type catalytic domain maps to 750–1219; sequence IPCLVDGFKP…TWQDLWHEDL (470 aa). Tyrosine 840 acts as the O-(5'-phospho-DNA)-tyrosine intermediate in catalysis. A disordered region spans residues 1249–1520; that stretch reads AADAKTGRGP…RGRVVDSDSD (272 aa). Over residues 1283–1320 the composition is skewed to basic and acidic residues; sequence TKAKYEKMSQPKKERVKKEPKEPKEPKKVKKEGQDIKK. The span at 1342 to 1364 shows a compositional bias: acidic residues; sequence MSEESDVEFDEGIDFDSDDDGVE.

It belongs to the type II topoisomerase family. As to quaternary structure, homodimer. Interacts with nmad-1; the interaction is required for localization of top-2 to DNA. Interacts with gcna-1; this interaction allows the resolution of topoisomerase 2 DNA-protein cross-links. It depends on Mg(2+) as a cofactor. Requires Mn(2+) as cofactor. The cofactor is Ca(2+). As to expression, expressed in the hermaphrodite and male germline.

The protein resides in the nucleus. It localises to the nucleoplasm. It is found in the chromosome. Its subcellular location is the cytoplasm. The protein localises to the cytoskeleton. The protein resides in the spindle. It catalyses the reaction ATP-dependent breakage, passage and rejoining of double-stranded DNA.. Its function is as follows. Control of topological states of DNA by transient breakage and subsequent rejoining of DNA strands. Topoisomerase II makes double-strand breaks. Essential during mitosis in the adult germline and during embryogenesis for proper segregation of daughter chromosomes. Required for centromere resolution during mitosis. Required for chromosome segregation in anaphase of meiosis I during spermatogenesis. Promotes cleavage furrow stability during cytokinesis upon the presence of chromatin obstructions. Promotes DNA break formation upon zygotic genome activation in the Z2 and Z3 primordial germ cells in L1 larvae, thereby activating a checkpoint response. Essential for embryogenesis. The protein is DNA topoisomerase 2 top-2 of Caenorhabditis elegans.